Here is a 250-residue protein sequence, read N- to C-terminus: Flavin-dependent thymidylate synthase (250 aa).

The ThyX domain occupies 7–233 (LRVQLIAKTD…PSIFGDFDIA (227 aa)). FAD is bound by residues S71, 95 to 97 (RHR), and Q103. DUMP-binding positions include 92–95 (ELIR), 103–107 (QLSQR), and R172. Positions 95–105 (RHRHFSYSQLS) match the ThyX motif motif. Residues 188 to 190 (NYR) and H194 contribute to the FAD site. R199 provides a ligand contact to dUMP. Catalysis depends on R199, which acts as the Involved in ionization of N3 of dUMP, leading to its activation.

The protein belongs to the thymidylate synthase ThyX family. Homotetramer. Requires FAD as cofactor.

It catalyses the reaction dUMP + (6R)-5,10-methylene-5,6,7,8-tetrahydrofolate + NADPH + H(+) = dTMP + (6S)-5,6,7,8-tetrahydrofolate + NADP(+). It participates in pyrimidine metabolism; dTTP biosynthesis. Functionally, catalyzes the reductive methylation of 2'-deoxyuridine-5'-monophosphate (dUMP) to 2'-deoxythymidine-5'-monophosphate (dTMP) while utilizing 5,10-methylenetetrahydrofolate (mTHF) as the methyl donor, and NADPH and FADH(2) as the reductant. In Mycobacteroides abscessus (strain ATCC 19977 / DSM 44196 / CCUG 20993 / CIP 104536 / JCM 13569 / NCTC 13031 / TMC 1543 / L948) (Mycobacterium abscessus), this protein is Flavin-dependent thymidylate synthase.